The chain runs to 1064 residues: Leucine--tRNA ligase (1064 aa).

Residues 1-25 (MARAMSETAEPGARTGAADTTVAPT) are disordered. The short motif at 106 to 117 (PYPSGSGLHVGH) is the 'HIGH' region element. The segment at 435-456 (GRPGGGTEPADTAGPEAGADPA) is disordered. The 'KMSKS' region motif lies at 831–835 (KMGKS). Residue Lys-834 participates in ATP binding.

This sequence belongs to the class-I aminoacyl-tRNA synthetase family.

It localises to the cytoplasm. It carries out the reaction tRNA(Leu) + L-leucine + ATP = L-leucyl-tRNA(Leu) + AMP + diphosphate. This chain is Leucine--tRNA ligase, found in Frankia casuarinae (strain DSM 45818 / CECT 9043 / HFP020203 / CcI3).